Consider the following 446-residue polypeptide: Phosphoglucosamine mutase (446 aa).

Serine 103 serves as the catalytic Phosphoserine intermediate. Mg(2+) contacts are provided by serine 103, aspartate 242, aspartate 244, and aspartate 246. Phosphoserine is present on serine 103.

This sequence belongs to the phosphohexose mutase family. Requires Mg(2+) as cofactor. Post-translationally, activated by phosphorylation.

The catalysed reaction is alpha-D-glucosamine 1-phosphate = D-glucosamine 6-phosphate. Its function is as follows. Catalyzes the conversion of glucosamine-6-phosphate to glucosamine-1-phosphate. The chain is Phosphoglucosamine mutase from Vibrio cholerae serotype O1 (strain ATCC 39315 / El Tor Inaba N16961).